The sequence spans 247 residues: 5-oxoprolinase subunit A 1 (247 aa).

Belongs to the LamB/PxpA family. As to quaternary structure, forms a complex composed of PxpA, PxpB and PxpC.

The enzyme catalyses 5-oxo-L-proline + ATP + 2 H2O = L-glutamate + ADP + phosphate + H(+). Functionally, catalyzes the cleavage of 5-oxoproline to form L-glutamate coupled to the hydrolysis of ATP to ADP and inorganic phosphate. The polypeptide is 5-oxoprolinase subunit A 1 (Ralstonia nicotianae (strain ATCC BAA-1114 / GMI1000) (Ralstonia solanacearum)).